Here is a 286-residue protein sequence, read N- to C-terminus: tRNA (guanine-N(1)-)-methyltransferase (286 aa).

S-adenosyl-L-methionine is bound by residues Gly116 and Ile140–Leu145. The tract at residues Asp232–His286 is disordered.

It belongs to the RNA methyltransferase TrmD family. In terms of assembly, homodimer.

It is found in the cytoplasm. The enzyme catalyses guanosine(37) in tRNA + S-adenosyl-L-methionine = N(1)-methylguanosine(37) in tRNA + S-adenosyl-L-homocysteine + H(+). Specifically methylates guanosine-37 in various tRNAs. The chain is tRNA (guanine-N(1)-)-methyltransferase from Acidothermus cellulolyticus (strain ATCC 43068 / DSM 8971 / 11B).